Here is a 154-residue protein sequence, read N- to C-terminus: S-protein homolog 12 (154 aa).

A signal peptide spans 1-30 (MGTNKIPKTLNGNLVLILIITIMMVTHSHG).

It belongs to the plant self-incompatibility (S1) protein family.

It is found in the secreted. This chain is S-protein homolog 12, found in Arabidopsis thaliana (Mouse-ear cress).